The chain runs to 488 residues: uncharacterized protein (488 aa).

It belongs to the protein kinase superfamily. ADCK protein kinase family.

This is an uncharacterized protein from Mycobacterium tuberculosis (strain CDC 1551 / Oshkosh).